A 131-amino-acid chain; its full sequence is Small ribosomal subunit protein uS8 (131 aa).

Belongs to the universal ribosomal protein uS8 family. Part of the 30S ribosomal subunit. Contacts proteins S5 and S12.

One of the primary rRNA binding proteins, it binds directly to 16S rRNA central domain where it helps coordinate assembly of the platform of the 30S subunit. The chain is Small ribosomal subunit protein uS8 from Dehalococcoides mccartyi (strain CBDB1).